The chain runs to 97 residues: Large ribosomal subunit protein eL37 (97 aa).

Position 10 is an N6-acetyllysine (Lys10). Positions 19, 22, 34, and 37 each coordinate Zn(2+). The C4-type zinc-finger motif lies at 19 to 37 (CRRCGSKAYHLQKSTCGKC). Ser96 and Ser97 each carry phosphoserine.

The protein belongs to the eukaryotic ribosomal protein eL37 family. Component of the large ribosomal subunit.

Its subcellular location is the cytoplasm. Its function is as follows. Component of the large ribosomal subunit. The ribosome is a large ribonucleoprotein complex responsible for the synthesis of proteins in the cell. This Bos taurus (Bovine) protein is Large ribosomal subunit protein eL37 (RPL37).